The following is a 130-amino-acid chain: Gloverin (130 aa).

Hemolymph.

Its subcellular location is the secreted. Functionally, antibacterial protein active against Gram-negative bacteria. This is Gloverin from Hyalophora cecropia (Cecropia moth).